Here is a 370-residue protein sequence, read N- to C-terminus: Succinoglycan biosynthesis protein ExoH (370 aa).

The next 10 membrane-spanning stretches (helical) occupy residues I14–F34, V46–Y66, T88–Q108, L144–V164, V170–K190, I193–L213, F216–Y236, L244–I264, G282–W302, and L307–A327. The tract at residues A350–R370 is disordered.

It belongs to the acyltransferase 3 family.

Its subcellular location is the cell membrane. The protein operates within glycan metabolism; exopolysaccharide biosynthesis. In terms of biological role, required for the succinyl modification of the seventh sugar (glucose) of the octasaccharide subunit of succinoglycan (EPS I). The chain is Succinoglycan biosynthesis protein ExoH (exoH) from Rhizobium meliloti (strain 1021) (Ensifer meliloti).